The primary structure comprises 510 residues: DNA nucleotidylexotransferase (510 aa).

The tract at residues Met-1 to Pro-22 is disordered. Positions Pro-11–Arg-17 match the Nuclear localization signal motif. The region spanning Pro-27–Gln-124 is the BRCT domain. Position 134 is a phosphoserine (Ser-134). Residues Ser-151–Ala-510 form a mediates interaction with DNTTIP2 region. The tract at residues Val-258–Thr-262 is involved in DNA binding. Residues Gly-333–Lys-338 and His-342–Asp-345 contribute to the a 2'-deoxyribonucleoside 5'-triphosphate site. Residues Asp-343, Asp-345, and Asp-434 each coordinate Mg(2+). Gly-449–Trp-450 lines the a 2'-deoxyribonucleoside 5'-triphosphate pocket.

This sequence belongs to the DNA polymerase type-X family. As to quaternary structure, interacts with PRP19 and DNTTIP1. Forms a ternary complex with DNTTIP2 and core histone. Released from this complex by PCNA. Interacts with TRERF1. Mg(2+) is required as a cofactor. Isoform TDT-L: Expressed in the thymus, and, at lower levels, in the bone marrow. Detected in both cycling and noncycling pro-B and pre-B cells (at protein level). Isoform TDT-S: Expressed in both cycling and noncycling pro-B, but not pre-B, cells (at protein level). Not detected in mature peripheral or germinal center B cells.

It localises to the nucleus. It is found in the cytoplasm. The enzyme catalyses DNA(n) + a 2'-deoxyribonucleoside 5'-triphosphate = DNA(n+1) + diphosphate. Functionally, transferase that catalyzes the nontemplated addition of nucleoside triphosphate to coding ends during V(D)J recombination (N addition). Involved in the generation of diversity in the antigen-binding region of immunoglobulin heavy and light chains and T-cell receptors during B- and T-cell development. Does not act on double-stranded DNA with blunt ends. Its function is as follows. 3'-to-5' DNA exonuclease. Involved in the generation of diversity in the antigen-binding region of immunoglobulin heavy and light chains and T-cell receptors during B- and T-cell development. Acts on single-stranded and double-stranded DNA with 3' or 5' extensions, but not on double-stranded DNA with blunt ends. Attenuates not only isoform TDT-S-catalyzed N addition, but also P (palindromic) addition in coding joins. Lacks terminal transferase activity. In Mus musculus (Mouse), this protein is DNA nucleotidylexotransferase (Dntt).